The primary structure comprises 140 residues: Nucleoside diphosphate kinase (140 aa).

Lysine 11, phenylalanine 59, arginine 87, threonine 93, arginine 104, and asparagine 114 together coordinate ATP. Histidine 117 acts as the Pros-phosphohistidine intermediate in catalysis.

The protein belongs to the NDK family. Homotetramer. Requires Mg(2+) as cofactor.

It is found in the cytoplasm. It carries out the reaction a 2'-deoxyribonucleoside 5'-diphosphate + ATP = a 2'-deoxyribonucleoside 5'-triphosphate + ADP. It catalyses the reaction a ribonucleoside 5'-diphosphate + ATP = a ribonucleoside 5'-triphosphate + ADP. Functionally, major role in the synthesis of nucleoside triphosphates other than ATP. The ATP gamma phosphate is transferred to the NDP beta phosphate via a ping-pong mechanism, using a phosphorylated active-site intermediate. This is Nucleoside diphosphate kinase from Nitrobacter hamburgensis (strain DSM 10229 / NCIMB 13809 / X14).